Consider the following 398-residue polypeptide: Cytochrome P450 165B3 (398 aa).

Cys347 is a heme binding site.

This sequence belongs to the cytochrome P450 family. The cofactor is heme.

Its pathway is antibiotic biosynthesis; vancomycin biosynthesis. In terms of biological role, involved in the coupling of aromatic side chains of the heptapeptide of vancomycin. This Amycolatopsis orientalis (Nocardia orientalis) protein is Cytochrome P450 165B3 (cyp165B3).